Reading from the N-terminus, the 32-residue chain is ITEEVAAAAAVGAGGYVXXLGEAGHHHLFNHE.

In Zea mays (Maize), this protein is Unknown protein from spot 206 of 2D-PAGE of etiolated coleoptile.